The chain runs to 391 residues: Isocitrate dehydrogenase [NADP] (391 aa).

Positions 102, 104, 108, 118, and 142 each coordinate D-threo-isocitrate. D283 is a Mg(2+) binding site.

The protein belongs to the isocitrate and isopropylmalate dehydrogenases family. As to quaternary structure, homodimer. The cofactor is Mg(2+). Mn(2+) serves as cofactor.

It catalyses the reaction D-threo-isocitrate + NADP(+) = 2-oxoglutarate + CO2 + NADPH. Functionally, catalyzes the oxidative decarboxylation of isocitrate to 2-oxoglutarate and carbon dioxide with the concomitant reduction of NADP(+). The polypeptide is Isocitrate dehydrogenase [NADP] (icd) (Streptococcus salivarius).